Here is a 351-residue protein sequence, read N- to C-terminus: Anthranilate phosphoribosyltransferase (351 aa).

Residues G80, 83–84, T88, 90–93, 108–116, and S120 contribute to the 5-phospho-alpha-D-ribose 1-diphosphate site; these read GD, NIST, and KHGNRSVTS. Position 80 (G80) interacts with anthranilate. S92 is a Mg(2+) binding site. N111 is a binding site for anthranilate. Anthranilate is bound at residue R166. Residues D229 and E230 each coordinate Mg(2+).

The protein belongs to the anthranilate phosphoribosyltransferase family. Homodimer. Mg(2+) is required as a cofactor.

It carries out the reaction N-(5-phospho-beta-D-ribosyl)anthranilate + diphosphate = 5-phospho-alpha-D-ribose 1-diphosphate + anthranilate. Its pathway is amino-acid biosynthesis; L-tryptophan biosynthesis; L-tryptophan from chorismate: step 2/5. Its function is as follows. Catalyzes the transfer of the phosphoribosyl group of 5-phosphorylribose-1-pyrophosphate (PRPP) to anthranilate to yield N-(5'-phosphoribosyl)-anthranilate (PRA). This Pelodictyon phaeoclathratiforme (strain DSM 5477 / BU-1) protein is Anthranilate phosphoribosyltransferase.